The following is a 64-amino-acid chain: Beta-insect excitatory toxin OdTx12 (64 aa).

The 59-residue stretch at 1-59 folds into the LCN-type CS-alpha/beta domain; sequence QSTGGKAPECLLSNYCNNECTKVHYADKGYCCLLSCYCFGLSDDKKVLEISDSRKKYCD. 4 cysteine pairs are disulfide-bonded: C10/C31, C16/C36, C20/C38, and C32/C58.

This sequence belongs to the long (4 C-C) scorpion toxin superfamily. Sodium channel inhibitor family. Beta subfamily. Expressed by the venom gland.

It localises to the secreted. Its function is as follows. Excitatory insect beta-toxins induce a spastic paralysis. They bind voltage-independently at site-4 of sodium channels (Nav) and shift the voltage of activation toward more negative potentials thereby affecting sodium channel activation and promoting spontaneous and repetitive firing. In vivo, this recombinant protein is lethal to Locusta migratoria larvae after injection, but has no significant effect when orally administered. Is not toxic to mice after intracerebroventricular injection. The polypeptide is Beta-insect excitatory toxin OdTx12 (Odontobuthus doriae (Yellow Iranian scorpion)).